The sequence spans 449 residues: SUPPRESSOR OF GAMMA RESPONSE 1 (449 aa).

The NAC domain maps to 58-211 (LPRGVKFDPS…DYVVSKIFYQ (154 aa)). A DNA-binding region spans residues 167 to 217 (RGCKKIMVLYGGKAVKTNWVMHQYHLGIEEDEKEGDYVVSKIFYQQPQQLV). Residues 324-336 (DDKEEQEKDRDNE) show a composition bias toward basic and acidic residues. Residues 324–348 (DDKEEQEKDRDNENQGEEDPTWFDS) are disordered.

Post-translationally, phosphorylated in a DNA stress-independent manner. Hyperphosphorylated on SQ motifs upon double-strand breaks, H(2)O(2) or zeocin treatments. Hyperphosphorylation is required for SOG1 function, and unlike constitutive phosphorylation, is ATM dependent. As to expression, expressed in shoot and root apical meristems, in lateral root primordia, in the vasculature of young leaves and in the root stele.

Its subcellular location is the nucleus. Its function is as follows. Transcription factor regulating the transcriptional activation response to gamma irradiation. Required for stem-cell death induced by UVB or by gamma irradiation. Not required for ATM activation, but participates in pathways governed by both ATM and ATR sensor kinases. Involved in DNA damage response (DDR) system that regulates cell cycle arrest. Functional homolog of animal p53. Regulates SMR5 and SMR7 transcription. Regulates DNA repair and cytokinin signaling separately and plays a key role in controlling lateral root formation under genotoxic stress. In Arabidopsis thaliana (Mouse-ear cress), this protein is SUPPRESSOR OF GAMMA RESPONSE 1.